The following is a 168-amino-acid chain: Lipid transfer protein EARLI 1 (168 aa).

A signal peptide spans 1-25 (MASKNSASIALFFALNIIFFTLTAA). The disordered stretch occupies residues 32 to 81 (PSPKHKPVPSPKPKPVPSPKPKPVPSPSVPSPSVPSPNPRPVTPPRTPGS). Residues 34-41 (PKHKPVPS) form an A-1 repeat. Residues 34–57 (PKHKPVPSPKPKPVPSPKPKPVPS) form a 3 X 8 AA repeats A of P-K-[HP]-K-P-V-P-S region. Positions 39-78 (VPSPKPKPVPSPKPKPVPSPSVPSPSVPSPNPRPVTPPRT) are enriched in pro residues. One copy of the A-2 repeat lies at 42–49 (PKPKPVPS). Residues 50-57 (PKPKPVPS) form an A-3 repeat. The stretch at 58 to 62 (PSVPS) is one B-1 repeat. Positions 58–67 (PSVPSPSVPS) are 2 X 58 AA tandem repeats B of P-S-V-P-S. One copy of the B-2 repeat lies at 63-67 (PSVPS).

Belongs to the plant LTP family. PEARLI1 subfamily. Mostly expressed in aerial part of seedlings, and, to a lower extent, in roots. Higher basal levels in early-flowering ecotypes.

The protein resides in the secreted. It localises to the cell wall. In terms of biological role, probable lipid transfer protein (LTP). May improve freezing survival. Seems to control the flowering process and lignin synthesis. Has an auxiliary role for germinability and early seedling development under low temperature and salt stress conditions, probably in an abscisic acid- (ABA) dependent manner. Confers resistance to Botrytis cinerea and exhibits anti-fungal activity, at least against S.cerevisiae, B.cinerea and Fusarium oxysporum, probably by increasing their membrane permeability. The protein is Lipid transfer protein EARLI 1 (EARLI1) of Arabidopsis thaliana (Mouse-ear cress).